A 267-amino-acid chain; its full sequence is 14-3-3-like protein GF14 chi (267 aa).

Residue Ala2 is modified to N-acetylalanine. Phosphoserine occurs at positions 72 and 195. Phosphothreonine is present on Thr216. Ser267 bears the Phosphoserine mark.

Belongs to the 14-3-3 family. As to quaternary structure, interacts with TPK1. Interacts with the isocitrate dehydrogenase IDH3, and malate dehydrogenases MDH1 and MDH2. Interacts with DREB1A and DREB1B in the nucleus. Interacts with CINV1.

It localises to the nucleus. It is found in the cytoplasm. Its function is as follows. Is associated with a DNA binding complex that binds to the G box, a well-characterized cis-acting DNA regulatory element found in plant genes. Involved in the regulation of nutrient metabolism. The protein is 14-3-3-like protein GF14 chi (GRF1) of Arabidopsis thaliana (Mouse-ear cress).